The sequence spans 334 residues: Catabolite repressor/activator (334 aa).

One can recognise an HTH lacI-type domain in the interval methionine 1–alanine 58. Residues leucine 3–asparagine 22 constitute a DNA-binding region (H-T-H motif).

As to quaternary structure, homotetramer.

Functionally, global transcriptional regulator, which plays an important role in the regulation of carbon metabolism. This is Catabolite repressor/activator (cra) from Salmonella typhimurium (strain LT2 / SGSC1412 / ATCC 700720).